We begin with the raw amino-acid sequence, 173 residues long: Regulator of ribonuclease activity A (173 aa).

The protein belongs to the RraA family. As to quaternary structure, homotrimer. Binds to both RNA-binding sites in the C-terminal region of Rne and to RhlB.

Its subcellular location is the cytoplasm. Its function is as follows. Globally modulates RNA abundance by binding to RNase E (Rne) and regulating its endonucleolytic activity. Can modulate Rne action in a substrate-dependent manner by altering the composition of the degradosome. Modulates RNA-binding and helicase activities of the degradosome. This chain is Regulator of ribonuclease activity A, found in Vibrio vulnificus (strain YJ016).